A 167-amino-acid polypeptide reads, in one-letter code: HTH-type transcriptional repressor IacR (167 aa).

Residues 1-10 (MSNAKNTSAA) are compositionally biased toward polar residues. Residues 1-25 (MSNAKNTSAASPARKGHSHHDPASD) form a disordered region. In terms of domain architecture, HTH marR-type spans 30-162 (EDFPFYWLAR…LNRMLEVVFH (133 aa)). Positions 76–99 (ISEISTHAIAKLSTITKIVYRMKE) form a DNA-binding region, H-T-H motif.

Its activity is regulated as follows. Exposure to indole-3-acetic acid (IAA) probably relieves the repressor activity. In terms of biological role, probably acts as a repressor of iacA expression. The chain is HTH-type transcriptional repressor IacR from Pseudomonas putida (Arthrobacter siderocapsulatus).